Reading from the N-terminus, the 69-residue chain is Large ribosomal subunit protein bL32c (69 aa).

It belongs to the bacterial ribosomal protein bL32 family.

Its subcellular location is the plastid. The protein resides in the chloroplast. The chain is Large ribosomal subunit protein bL32c (rpl32) from Marchantia polymorpha (Common liverwort).